The primary structure comprises 657 residues: THO complex subunit 1 (657 aa).

At methionine 1 the chain carries N-acetylmethionine. The residue at position 2 (serine 2) is a Phosphoserine. Residue threonine 4 is modified to Phosphothreonine. Lysine 31 participates in a covalent cross-link: Glycyl lysine isopeptide (Lys-Gly) (interchain with G-Cter in SUMO2). Lysine 133 carries the post-translational modification N6-acetyllysine. The tract at residues 133 to 167 (KNYLLRMCNDLLRRLSKSQNTVFCGRIQLFLARLF) is dock domain; interaction with THOC2. Positions 194–222 (QESTLGQKHTEDREEGMDVEEGEMGDEEA) are disordered. Residues 206–222 (REEGMDVEEGEMGDEEA) show a composition bias toward acidic residues. A dock domain; interaction with THOC2 region spans residues 227-397 (SIPIDYNLYR…WNSWKNEGCP (171 aa)). Lysine 300 is subject to N6-acetyllysine. Lysine 408 participates in a covalent cross-link: Glycyl lysine isopeptide (Lys-Gly) (interchain with G-Cter in SUMO2). The Nuclear localization signal signature appears at 414–430 (RKRTAPEDFLGKGPTKK). Positions 533-569 (LPPPSEEIKTGEDEDEEDNDALLKENESPDVRRDKPV) are disordered. Serine 537 carries the post-translational modification Phosphoserine. Threonine 542 is subject to Phosphothreonine. The segment covering 553–569 (ALLKENESPDVRRDKPV) has biased composition (basic and acidic residues). Phosphoserine is present on serine 560. The region spanning 570–653 (TGEQIEVFAN…DLAESLTNDN (84 aa)) is the Death domain. A Glycyl lysine isopeptide (Lys-Gly) (interchain with G-Cter in SUMO2) cross-link involves residue lysine 580. Lysine 595 is covalently cross-linked (Glycyl lysine isopeptide (Lys-Gly) (interchain with G-Cter in SUMO1); alternate). Lysine 595 is covalently cross-linked (Glycyl lysine isopeptide (Lys-Gly) (interchain with G-Cter in SUMO2); alternate).

This sequence belongs to the THOC1 family. In terms of assembly, component of the THO subcomplex, which is composed of THOC1, THOC2, THOC3, THOC5, THOC6 and THOC7. The THO subcomplex interacts with DDX39B to form the THO-DDX39B complex which multimerizes into a 28-subunit tetrameric assembly. Component of the transcription/export (TREX) complex at least composed of ALYREF/THOC4, DDX39B, SARNP/CIP29, CHTOP and the THO subcomplex; in the complex interacts with THOC2, THOC5 and THOC7. TREX seems to have a dynamic structure involving ATP-dependent remodeling. Binds to the hypophosphorylated form of RB1. Interacts with RNA polymerase II. Interacts with LUZP4. Post-translationally, expression is altered specifically during apoptosis and is accompanied by the appearance of novel forms with smaller apparent molecular mass. In terms of processing, polyubiquitinated, leading to proteasomal degradation; probably involves NEDD4. In terms of tissue distribution, ubiquitous. Expressed in various cancer cell lines. Expressed at very low levels in normal breast epithelial cells and highly expressed in breast tumors. Expression is strongly associated with an aggressive phenotype of breast tumors and expression correlates with tumor size and the metastatic state of the tumor progression.

It is found in the nucleus speckle. It localises to the nucleus. The protein localises to the nucleoplasm. The protein resides in the nucleus matrix. Its subcellular location is the cytoplasm. Component of the THO subcomplex of the TREX complex which is thought to couple mRNA transcription, processing and nuclear export, and which specifically associates with spliced mRNA and not with unspliced pre-mRNA. Required for efficient export of polyadenylated RNA. The THOC1-THOC2-THOC3 core complex alone is sufficient to bind export factor NXF1-NXT1 and promote ATPase activity of DDX39B/UAP56. TREX is recruited to spliced mRNAs by a transcription-independent mechanism, binds to mRNA upstream of the exon-junction complex (EJC) and is recruited in a splicing- and cap-dependent manner to a region near the 5' end of the mRNA where it functions in mRNA export to the cytoplasm via the TAP/NXF1 pathway. Regulates transcriptional elongation of a subset of genes. Involved in genome stability by preventing co-transcriptional R-loop formation. May play a role in hair cell formation, hence may be involved in hearing. Functionally, participates in an apoptotic pathway which is characterized by activation of caspase-6, increases in the expression of BAK1 and BCL2L1 and activation of NF-kappa-B. This pathway does not require p53/TP53, nor does the presence of p53/TP53 affect the efficiency of cell killing. Activates a G2/M cell cycle checkpoint prior to the onset of apoptosis. Apoptosis is inhibited by association with RB1. Its function is as follows. (Microbial infection) The TREX complex is essential for the export of Kaposi's sarcoma-associated herpesvirus (KSHV) intronless mRNAs and infectious virus production. This Homo sapiens (Human) protein is THO complex subunit 1 (THOC1).